We begin with the raw amino-acid sequence, 656 residues long: L-type lectin-domain containing receptor kinase S.1 (656 aa).

An N-terminal signal peptide occupies residues 1 to 29 (MSWQWRRRQWPSPLLLILIVLHLVSSSSA). Positions 30-273 (IDFLYNSFSS…ARRILAWSLS (244 aa)) are legume-lectin like. Residues 30-304 (IDFLYNSFSS…SSSLSTGAIA (275 aa)) lie on the Extracellular side of the membrane. Asn-42, Asn-63, Asn-121, Asn-139, Asn-191, Asn-219, Asn-282, and Asn-293 each carry an N-linked (GlcNAc...) asparagine glycan. The chain crosses the membrane as a helical span at residues 305–325 (GIVIGCVVFVALIGFGGYLIW). Residues 326–656 (KKLMREEEEE…AAADSTAAHA (331 aa)) are Cytoplasmic-facing. The Protein kinase domain occupies 361–639 (FSNDRLLGSG…LLGSPQEDLL (279 aa)). Residues 367-375 (LGSGGFGKV) and Lys-389 each bind ATP. Asp-485 functions as the Proton acceptor in the catalytic mechanism.

In the C-terminal section; belongs to the protein kinase superfamily. Ser/Thr protein kinase family. The protein in the N-terminal section; belongs to the leguminous lectin family.

It localises to the cell membrane. The enzyme catalyses L-seryl-[protein] + ATP = O-phospho-L-seryl-[protein] + ADP + H(+). It carries out the reaction L-threonyl-[protein] + ATP = O-phospho-L-threonyl-[protein] + ADP + H(+). Functionally, involved in resistance response to the pathogenic oomycetes Phytophthora infestans and Phytophthora capsici and to the pathogenic bacteria Pseudomonas syringae. The sequence is that of L-type lectin-domain containing receptor kinase S.1 from Arabidopsis thaliana (Mouse-ear cress).